The following is a 419-amino-acid chain: Transcription factor IIIB 50 kDa subunit (419 aa).

The TFIIB-type zinc finger occupies 2 to 36 (PGRGRCPDCGSTELVEDSHYSQSQLVCSDCGCVVT). The Zn(2+) site is built by cysteine 7, cysteine 10, cysteine 28, and cysteine 31. A run of 2 repeats spans residues 72 to 157 (GLRR…MQIV) and 173 to 249 (VKTY…SLAR). The interval 108 to 114 (AARLQKK) is interaction with target DNA. The segment covering 314-326 (DGTAEVETREKEP) has biased composition (basic and acidic residues). A disordered region spans residues 314 to 351 (DGTAEVETREKEPPGWGQGQGEGEVGNNSLGLPQGKRP). The residue at position 353 (serine 353) is a Phosphoserine. The segment at 357-363 (LLPPCML) is required for the formation of a ternary complex with DNA and TBP; not required for interaction with TBP in the absence of DNA. Cysteine sulfenic acid (-SOH) is present on cysteine 361. The required for interaction with TBP and formation of a ternary complex with DNA and TBP stretch occupies residues 365 to 419 (SPKRICPVPPVSTVTGDENISDSEIEQYLRTPQEVRDFQRAQAARQAATSVPNPP).

Belongs to the TFIIB family. In terms of assembly, component of TFIIIB complexes. The TFIIIB complex has two activities, alpha and beta. The TFIIIB-alpha activity complex is composed of TBP, BDP1, and a complex containing both BRF2 and at least four stably associated proteins; this complex inhibits the transcription by pol III via its phosphorylation by CK2; YY1 facilitates the TFIIIB-alpha complex formation. Interacts with TBP; this interaction promotes recruitment of BRF2 to TATA box-containing promoters. Interacts with TBP and the BURE sequence (GC-rich sequence downstream from the TATA box) to form a strong ternary complex which is joined by BDP1; this ternary complex stimulates pol III transcription. Forms a trimeric complex composed of TBP, BRF2 and mini-SNAPc complex (SNAP43, SNAP50, and the N-terminal third of SNAP190) on the promoter. Assembly of the TBP-BRF2 complex is stimulated by SNAP190. Interacts with MAF1 and SNAPC4. In response to oxidative stress, Cys-361 is reversibly oxidized to cysteine sulfenic acid. Oxidation of Cys-361 impairs formation of a ternary complex with TBP and DNA and down-regulates expression of target genes in response to oxidative stress.

The protein localises to the nucleus. In terms of biological role, general activator of RNA polymerase III transcription. Factor exclusively required for RNA polymerase III transcription of genes with promoter elements upstream of the initiation sites. Contributes to the regulation of gene expression; functions as activator in the absence of oxidative stress. Down-regulates expression of target genes in response to oxidative stress. Overexpression protects cells against apoptosis in response to oxidative stress. This Homo sapiens (Human) protein is Transcription factor IIIB 50 kDa subunit (BRF2).